Here is a 77-residue protein sequence, read N- to C-terminus: Exodeoxyribonuclease 7 small subunit (77 aa).

The protein belongs to the XseB family. In terms of assembly, heterooligomer composed of large and small subunits.

It is found in the cytoplasm. It carries out the reaction Exonucleolytic cleavage in either 5'- to 3'- or 3'- to 5'-direction to yield nucleoside 5'-phosphates.. Bidirectionally degrades single-stranded DNA into large acid-insoluble oligonucleotides, which are then degraded further into small acid-soluble oligonucleotides. The protein is Exodeoxyribonuclease 7 small subunit of Carboxydothermus hydrogenoformans (strain ATCC BAA-161 / DSM 6008 / Z-2901).